Consider the following 295-residue polypeptide: GTPase Era (295 aa).

In terms of domain architecture, Era-type G spans 5 to 172 (YCGYAAIIGR…EQAVHQLMPE (168 aa)). The segment at 13 to 20 (GRPNVGKS) is G1. Residue 13-20 (GRPNVGKS) participates in GTP binding. Positions 39-43 (QTTRY) are G2. The interval 60–63 (DTPG) is G3. GTP-binding positions include 60–64 (DTPGL) and 121–124 (NKVD). The segment at 121–124 (NKVD) is G4. A G5 region spans residues 151-153 (LSA). The region spanning 203–279 (LGQEIPYSLA…FLQLWVKVKS (77 aa)) is the KH type-2 domain.

It belongs to the TRAFAC class TrmE-Era-EngA-EngB-Septin-like GTPase superfamily. Era GTPase family. As to quaternary structure, monomer.

The protein resides in the cytoplasm. The protein localises to the cell inner membrane. Functionally, an essential GTPase that binds both GDP and GTP, with rapid nucleotide exchange. Plays a role in 16S rRNA processing and 30S ribosomal subunit biogenesis and possibly also in cell cycle regulation and energy metabolism. The chain is GTPase Era from Coxiella burnetii (strain RSA 331 / Henzerling II).